A 68-amino-acid chain; its full sequence is DNA-directed RNA polymerase subunit omega (68 aa).

This sequence belongs to the RNA polymerase subunit omega family. The RNAP catalytic core consists of 2 alpha, 1 beta, 1 beta' and 1 omega subunit. When a sigma factor is associated with the core the holoenzyme is formed, which can initiate transcription.

The catalysed reaction is RNA(n) + a ribonucleoside 5'-triphosphate = RNA(n+1) + diphosphate. Its function is as follows. Promotes RNA polymerase assembly. Latches the N- and C-terminal regions of the beta' subunit thereby facilitating its interaction with the beta and alpha subunits. The sequence is that of DNA-directed RNA polymerase subunit omega from Neisseria meningitidis serogroup C (strain 053442).